We begin with the raw amino-acid sequence, 321 residues long: Transaldolase (321 aa).

Lys-132 acts as the Schiff-base intermediate with substrate in catalysis.

It belongs to the transaldolase family. Type 1 subfamily. As to quaternary structure, homodimer.

It localises to the cytoplasm. It carries out the reaction D-sedoheptulose 7-phosphate + D-glyceraldehyde 3-phosphate = D-erythrose 4-phosphate + beta-D-fructose 6-phosphate. Its pathway is carbohydrate degradation; pentose phosphate pathway; D-glyceraldehyde 3-phosphate and beta-D-fructose 6-phosphate from D-ribose 5-phosphate and D-xylulose 5-phosphate (non-oxidative stage): step 2/3. Transaldolase is important for the balance of metabolites in the pentose-phosphate pathway. The protein is Transaldolase of Rhizobium etli (strain CIAT 652).